We begin with the raw amino-acid sequence, 353 residues long: Fe(3+) ions import ATP-binding protein FbpC 1 (353 aa).

The ABC transporter domain maps to 9-239 (VVFRNICKQF…PASAFIADFM (231 aa)). ATP is bound at residue 41–48 (GPSGCGKT).

This sequence belongs to the ABC transporter superfamily. Fe(3+) ion importer (TC 3.A.1.10) family. As to quaternary structure, the complex is composed of two ATP-binding proteins (FbpC), two transmembrane proteins (FbpB) and a solute-binding protein (FbpA).

Its subcellular location is the cell inner membrane. The catalysed reaction is Fe(3+)(out) + ATP + H2O = Fe(3+)(in) + ADP + phosphate + H(+). In terms of biological role, part of the ABC transporter complex FbpABC involved in Fe(3+) ions import. Responsible for energy coupling to the transport system. This chain is Fe(3+) ions import ATP-binding protein FbpC 1, found in Rhizobium meliloti (strain 1021) (Ensifer meliloti).